We begin with the raw amino-acid sequence, 197 residues long: GTP cyclohydrolase 1 (197 aa).

Zn(2+) contacts are provided by cysteine 85, histidine 88, and cysteine 156.

This sequence belongs to the GTP cyclohydrolase I family. Toroid-shaped homodecamer, composed of two pentamers of five dimers.

The catalysed reaction is GTP + H2O = 7,8-dihydroneopterin 3'-triphosphate + formate + H(+). Its pathway is cofactor biosynthesis; 7,8-dihydroneopterin triphosphate biosynthesis; 7,8-dihydroneopterin triphosphate from GTP: step 1/1. The sequence is that of GTP cyclohydrolase 1 from Mesorhizobium japonicum (strain LMG 29417 / CECT 9101 / MAFF 303099) (Mesorhizobium loti (strain MAFF 303099)).